The following is a 101-amino-acid chain: Small ribosomal subunit protein bS18c (101 aa).

The span at 1–19 (MNKSKRPFTKSKRSFRRRL) shows a compositional bias: basic residues. Residues 1–20 (MNKSKRPFTKSKRSFRRRLP) form a disordered region.

Belongs to the bacterial ribosomal protein bS18 family. As to quaternary structure, part of the 30S ribosomal subunit.

It localises to the plastid. It is found in the chloroplast. The sequence is that of Small ribosomal subunit protein bS18c from Arabis hirsuta (Hairy rock-cress).